We begin with the raw amino-acid sequence, 304 residues long: GTP cyclohydrolase FolE2 (304 aa).

It belongs to the GTP cyclohydrolase IV family.

It carries out the reaction GTP + H2O = 7,8-dihydroneopterin 3'-triphosphate + formate + H(+). It functions in the pathway cofactor biosynthesis; 7,8-dihydroneopterin triphosphate biosynthesis; 7,8-dihydroneopterin triphosphate from GTP: step 1/1. Its function is as follows. Converts GTP to 7,8-dihydroneopterin triphosphate. The protein is GTP cyclohydrolase FolE2 of Hahella chejuensis (strain KCTC 2396).